Reading from the N-terminus, the 164-residue chain is UPF0304 protein YE1336 (164 aa).

It belongs to the UPF0304 family.

This Yersinia enterocolitica serotype O:8 / biotype 1B (strain NCTC 13174 / 8081) protein is UPF0304 protein YE1336.